The primary structure comprises 279 residues: MNKDHTLYCSVYIRNAFFSEIGIGISANSCLLLFHTFMFIRGHRPRLTDLPIGFVALIHLVMLLLAAYITEDFFMSSGGWDDITCKLVIFLHRFFRSLSVCATCLLSVFQAIILCPQSSHLAKLKQNSPHQLSYFFIFLSIFYTSISSQILIAAIPTQNITFVNLIYITNSCSFLPLSSSMQHTFSTLLTFRNVFVIGLMGLSTCYMATLLCRHKTRSQRLQNSKLSPKATPEQRALRTILMLMSFFLLMSTFDSIISYSRTIITGKSTALLCPDSCRS.

Residues 1-19 (MNKDHTLYCSVYIRNAFFS) lie on the Extracellular side of the membrane. The helical transmembrane segment at 20–40 (EIGIGISANSCLLLFHTFMFI) threads the bilayer. At 41 to 49 (RGHRPRLTD) the chain is on the cytoplasmic side. The chain crosses the membrane as a helical span at residues 50–70 (LPIGFVALIHLVMLLLAAYIT). The Extracellular portion of the chain corresponds to 71–93 (EDFFMSSGGWDDITCKLVIFLHR). Cys-85 and Cys-172 are disulfide-bonded. A helical transmembrane segment spans residues 94 to 114 (FFRSLSVCATCLLSVFQAIIL). Topologically, residues 115 to 134 (CPQSSHLAKLKQNSPHQLSY) are cytoplasmic. Residues 135 to 155 (FFIFLSIFYTSISSQILIAAI) form a helical membrane-spanning segment. Over 156–159 (PTQN) the chain is Extracellular. An N-linked (GlcNAc...) asparagine glycan is attached at Asn-159. The helical transmembrane segment at 160 to 180 (ITFVNLIYITNSCSFLPLSSS) threads the bilayer. Residues 181–187 (MQHTFST) are Cytoplasmic-facing. Residues 188–208 (LLTFRNVFVIGLMGLSTCYMA) traverse the membrane as a helical segment. Residues 209–238 (TLLCRHKTRSQRLQNSKLSPKATPEQRALR) lie on the Extracellular side of the membrane. A helical transmembrane segment spans residues 239–259 (TILMLMSFFLLMSTFDSIISY). Residues 260–279 (SRTIITGKSTALLCPDSCRS) lie on the Cytoplasmic side of the membrane.

This sequence belongs to the G-protein coupled receptor 1 family. As to expression, expressed in a subset of sensory neurons located in the apical layer of the vomeronasal organ.

It localises to the cell membrane. Putative pheromone receptor implicated in the regulation of social and reproductive behavior. In Mus musculus (Mouse), this protein is Vomeronasal type-1 receptor A8.